We begin with the raw amino-acid sequence, 222 residues long: Hexitol phosphatase B (222 aa).

Asp13 (nucleophile) is an active-site residue. The a divalent metal cation site is built by Asp13 and Asp15. Residues 13-15 (DMD), 115-116 (SA), and Lys148 each bind substrate. Asp15 (proton donor) is an active-site residue. Position 173 (Asp173) interacts with a divalent metal cation.

Belongs to the HAD-like hydrolase superfamily. CbbY/CbbZ/Gph/YieH family. Mg(2+) serves as cofactor. The cofactor is Mn(2+). Requires Co(2+) as cofactor. It depends on Zn(2+) as a cofactor.

The enzyme catalyses sugar phosphate + H2O = sugar + phosphate.. It catalyses the reaction 2-deoxy-D-glucose 6-phosphate + H2O = 2-deoxy-D-glucose + phosphate. The catalysed reaction is D-mannitol 1-phosphate + H2O = D-mannitol + phosphate. It carries out the reaction D-sorbitol 6-phosphate + H2O = D-sorbitol + phosphate. Sugar-phosphate phosphohydrolase that catalyzes the dephosphorylation of D-mannitol 1-phosphate and D-sorbitol 6-phosphate. Also catalyzes the dephosphorylation of 2-deoxyglucose 6-phosphate (2dGlu6P); this is a biologically important activity in vivo since it contributes to the elimination of this toxic compound and plays an important role in the resistance of E.coli to 2-deoxyglucose. The chain is Hexitol phosphatase B from Escherichia coli O157:H7.